A 692-amino-acid polypeptide reads, in one-letter code: Elongation factor G (692 aa).

The 275-residue stretch at 8–282 folds into the tr-type G domain; that stretch reads ENTRNIGIMA…AVIDYLPSPL (275 aa). GTP-binding positions include 17–24, 81–85, and 135–138; these read AHIDAGKT, DTPGH, and NKMD.

It belongs to the TRAFAC class translation factor GTPase superfamily. Classic translation factor GTPase family. EF-G/EF-2 subfamily.

The protein resides in the cytoplasm. Functionally, catalyzes the GTP-dependent ribosomal translocation step during translation elongation. During this step, the ribosome changes from the pre-translocational (PRE) to the post-translocational (POST) state as the newly formed A-site-bound peptidyl-tRNA and P-site-bound deacylated tRNA move to the P and E sites, respectively. Catalyzes the coordinated movement of the two tRNA molecules, the mRNA and conformational changes in the ribosome. The sequence is that of Elongation factor G from Bacillus cereus (strain ZK / E33L).